The sequence spans 96 residues: ATP synthase subunit e, mitochondrial (96 aa).

Serine 2 is subject to N-acetylserine.

Belongs to the ATPase e subunit family. F-type ATPases have 2 components, CF(1) - the catalytic core - and CF(0) - the membrane proton channel. In yeast, the dimeric form of ATP synthase consists of 17 polypeptides: alpha, beta, gamma, delta, epsilon, 4 (B), 5 (OSCP), 6 (A), 8, 9 (C), d, E (Tim11), f, g, h, i/j and k.

It localises to the mitochondrion. The protein resides in the mitochondrion inner membrane. Functionally, mitochondrial membrane ATP synthase (F(1)F(0) ATP synthase or Complex V) produces ATP from ADP in the presence of a proton gradient across the membrane which is generated by electron transport complexes of the respiratory chain. F-type ATPases consist of two structural domains, F(1) - containing the extramembraneous catalytic core, and F(0) - containing the membrane proton channel, linked together by a central stalk and a peripheral stalk. During catalysis, ATP synthesis in the catalytic domain of F(1) is coupled via a rotary mechanism of the central stalk subunits to proton translocation. Part of the complex F(0) domain. Minor subunit located with subunit a in the membrane. The protein is ATP synthase subunit e, mitochondrial (TIM11) of Saccharomyces cerevisiae (strain ATCC 204508 / S288c) (Baker's yeast).